Reading from the N-terminus, the 667-residue chain is High affinity sulfate transporter 1 (667 aa).

A disordered region spans residues 16-38 (ETRSNSSSHRHGGGGGGDDTTSL). 11 helical membrane-spanning segments follow: residues 106–126 (GDFI…LAYA), 131–151 (LDPW…AFMG), 156–176 (IAIG…SNEI), 185–205 (LRLA…LGVC), 208–228 (GFLI…GAAI), 269–289 (WETI…KYIA), 296–316 (FWVS…FVYI), 350–370 (GAGV…AIAI), 425–445 (VSNI…TPLF), 452–472 (VLAS…AMVL), and 486–506 (GAFF…AVAI). Positions 537–660 (QYPKAAQIPG…LTVADAVATY (124 aa)) constitute an STAS domain.

It belongs to the SLC26A/SulP transporter (TC 2.A.53) family.

Its subcellular location is the membrane. High-affinity H(+)/sulfate cotransporter that mediates the uptake of sulfate by plant roots from low concentrations of sulfate in the soil solution. The protein is High affinity sulfate transporter 1 (ST1) of Stylosanthes hamata (Caribbean stylo).